Reading from the N-terminus, the 603-residue chain is Methionine--tRNA ligase (603 aa).

The short motif at 14-24 (PYANGPRHIGH) is the 'HIGH' region element. Zn(2+) is bound by residues Cys-146, Cys-149, Cys-159, and Cys-162. The short motif at 354-358 (KFSSS) is the 'KMSKS' region element. Residue Ser-357 coordinates ATP.

It belongs to the class-I aminoacyl-tRNA synthetase family. MetG type 1 subfamily. As to quaternary structure, monomer. It depends on Zn(2+) as a cofactor.

Its subcellular location is the cytoplasm. It carries out the reaction tRNA(Met) + L-methionine + ATP = L-methionyl-tRNA(Met) + AMP + diphosphate. Functionally, is required not only for elongation of protein synthesis but also for the initiation of all mRNA translation through initiator tRNA(fMet) aminoacylation. The sequence is that of Methionine--tRNA ligase from Salinispora tropica (strain ATCC BAA-916 / DSM 44818 / JCM 13857 / NBRC 105044 / CNB-440).